Reading from the N-terminus, the 79-residue chain is ATP synthase subunit c (79 aa).

2 consecutive transmembrane segments (helical) span residues 11-31 (MAAA…IGIL) and 53-73 (FFIV…LGLY).

The protein belongs to the ATPase C chain family. F-type ATPases have 2 components, F(1) - the catalytic core - and F(0) - the membrane proton channel. F(1) has five subunits: alpha(3), beta(3), gamma(1), delta(1), epsilon(1). F(0) has three main subunits: a(1), b(2) and c(10-14). The alpha and beta chains form an alternating ring which encloses part of the gamma chain. F(1) is attached to F(0) by a central stalk formed by the gamma and epsilon chains, while a peripheral stalk is formed by the delta and b chains.

It is found in the cell inner membrane. F(1)F(0) ATP synthase produces ATP from ADP in the presence of a proton or sodium gradient. F-type ATPases consist of two structural domains, F(1) containing the extramembraneous catalytic core and F(0) containing the membrane proton channel, linked together by a central stalk and a peripheral stalk. During catalysis, ATP synthesis in the catalytic domain of F(1) is coupled via a rotary mechanism of the central stalk subunits to proton translocation. In terms of biological role, key component of the F(0) channel; it plays a direct role in translocation across the membrane. A homomeric c-ring of between 10-14 subunits forms the central stalk rotor element with the F(1) delta and epsilon subunits. In Pectobacterium atrosepticum (strain SCRI 1043 / ATCC BAA-672) (Erwinia carotovora subsp. atroseptica), this protein is ATP synthase subunit c.